The sequence spans 105 residues: Probable tetrachloroethene reductive dehalogenase membrane anchor protein (105 aa).

The next 3 membrane-spanning stretches (helical) occupy residues 3–23 (IYDVLIWMALGMTALLIQYGI), 35–55 (IPLQICGFLANFFFIFALAWG), and 66–86 (AIGMGFIFFGGTALIPAIITY).

The protein belongs to the PceB family.

It is found in the cell membrane. May act as a membrane anchor for the tetrachloroethene reductive dehalogenase PceA. The polypeptide is Probable tetrachloroethene reductive dehalogenase membrane anchor protein (Dehalobacter restrictus (strain DSM 9455 / PER-K23)).